The primary structure comprises 521 residues: Bifunctional purine biosynthesis protein PurH (521 aa).

Residues 1 to 145 enclose the MGS-like domain; it reads MIKQALISVS…KNHRDVTVVV (145 aa).

Belongs to the PurH family.

The catalysed reaction is (6R)-10-formyltetrahydrofolate + 5-amino-1-(5-phospho-beta-D-ribosyl)imidazole-4-carboxamide = 5-formamido-1-(5-phospho-D-ribosyl)imidazole-4-carboxamide + (6S)-5,6,7,8-tetrahydrofolate. It catalyses the reaction IMP + H2O = 5-formamido-1-(5-phospho-D-ribosyl)imidazole-4-carboxamide. It functions in the pathway purine metabolism; IMP biosynthesis via de novo pathway; 5-formamido-1-(5-phospho-D-ribosyl)imidazole-4-carboxamide from 5-amino-1-(5-phospho-D-ribosyl)imidazole-4-carboxamide (10-formyl THF route): step 1/1. The protein operates within purine metabolism; IMP biosynthesis via de novo pathway; IMP from 5-formamido-1-(5-phospho-D-ribosyl)imidazole-4-carboxamide: step 1/1. This Paraburkholderia phytofirmans (strain DSM 17436 / LMG 22146 / PsJN) (Burkholderia phytofirmans) protein is Bifunctional purine biosynthesis protein PurH.